A 119-amino-acid polypeptide reads, in one-letter code: Large ribosomal subunit protein bL20c (119 aa).

Belongs to the bacterial ribosomal protein bL20 family.

It is found in the plastid. The protein resides in the chloroplast. In terms of biological role, binds directly to 23S ribosomal RNA and is necessary for the in vitro assembly process of the 50S ribosomal subunit. It is not involved in the protein synthesizing functions of that subunit. This Lolium perenne (Perennial ryegrass) protein is Large ribosomal subunit protein bL20c.